Consider the following 103-residue polypeptide: MQPNDITFFQRFQNDILAGRKTITIRDASESHFKAGDALRVGRFEDDGYFCTIEVTGTSTVTLDTLNEKHAQQENMSLDELKRVIAEIYPNQTQFYVIDFKCL.

One can recognise an ASCH domain in the interval 6–94 (ITFFQRFQND…IAEIYPNQTQ (89 aa)). The active-site Proton acceptor is lysine 21. Catalysis depends on threonine 24, which acts as the Nucleophile. Catalysis depends on glutamate 74, which acts as the Proton donor.

This sequence belongs to the N(4)-acetylcytidine amidohydrolase family.

The enzyme catalyses N(4)-acetylcytidine + H2O = cytidine + acetate + H(+). It carries out the reaction N(4)-acetyl-2'-deoxycytidine + H2O = 2'-deoxycytidine + acetate + H(+). The catalysed reaction is N(4)-acetylcytosine + H2O = cytosine + acetate + H(+). Catalyzes the hydrolysis of N(4)-acetylcytidine (ac4C). This Salmonella typhi protein is N(4)-acetylcytidine amidohydrolase (yqfB).